The sequence spans 482 residues: UDP-N-acetylmuramoyl-L-alanyl-D-glutamate--2,6-diaminopimelate ligase (482 aa).

Serine 30 provides a ligand contact to UDP-N-acetyl-alpha-D-muramoyl-L-alanyl-D-glutamate. 111-117 (GTNGKTT) is an ATP binding site. UDP-N-acetyl-alpha-D-muramoyl-L-alanyl-D-glutamate-binding positions include 153–154 (TT), serine 180, glutamine 186, and arginine 188. Lysine 220 is modified (N6-carboxylysine). Residues arginine 378, 402 to 405 (DNPR), glycine 455, and glutamate 459 contribute to the meso-2,6-diaminopimelate site. The Meso-diaminopimelate recognition motif signature appears at 402–405 (DNPR).

Belongs to the MurCDEF family. MurE subfamily. Requires Mg(2+) as cofactor. Carboxylation is probably crucial for Mg(2+) binding and, consequently, for the gamma-phosphate positioning of ATP.

It localises to the cytoplasm. The enzyme catalyses UDP-N-acetyl-alpha-D-muramoyl-L-alanyl-D-glutamate + meso-2,6-diaminopimelate + ATP = UDP-N-acetyl-alpha-D-muramoyl-L-alanyl-gamma-D-glutamyl-meso-2,6-diaminopimelate + ADP + phosphate + H(+). It participates in cell wall biogenesis; peptidoglycan biosynthesis. In terms of biological role, catalyzes the addition of meso-diaminopimelic acid to the nucleotide precursor UDP-N-acetylmuramoyl-L-alanyl-D-glutamate (UMAG) in the biosynthesis of bacterial cell-wall peptidoglycan. The protein is UDP-N-acetylmuramoyl-L-alanyl-D-glutamate--2,6-diaminopimelate ligase of Bacteroides thetaiotaomicron (strain ATCC 29148 / DSM 2079 / JCM 5827 / CCUG 10774 / NCTC 10582 / VPI-5482 / E50).